Here is a 287-residue protein sequence, read N- to C-terminus: Nucleotide-binding protein VIBHAR_03667 (287 aa).

Glycine 8–serine 15 lines the ATP pocket. Residue aspartate 56–asparagine 59 coordinates GTP.

Belongs to the RapZ-like family.

Displays ATPase and GTPase activities. This chain is Nucleotide-binding protein VIBHAR_03667, found in Vibrio campbellii (strain ATCC BAA-1116).